The primary structure comprises 99 residues: Large ribosomal subunit protein uL23 (99 aa).

This sequence belongs to the universal ribosomal protein uL23 family. As to quaternary structure, part of the 50S ribosomal subunit. Contacts protein L29, and trigger factor when it is bound to the ribosome.

In terms of biological role, one of the early assembly proteins it binds 23S rRNA. One of the proteins that surrounds the polypeptide exit tunnel on the outside of the ribosome. Forms the main docking site for trigger factor binding to the ribosome. This chain is Large ribosomal subunit protein uL23, found in Saccharopolyspora erythraea (strain ATCC 11635 / DSM 40517 / JCM 4748 / NBRC 13426 / NCIMB 8594 / NRRL 2338).